A 529-amino-acid polypeptide reads, in one-letter code: Peptide chain release factor 3 (529 aa).

One can recognise a tr-type G domain in the interval 11 to 280 (AKRRTFAIIS…GLVEWAPAPM (270 aa)). Residues 20-27 (SHPDAGKT), 88-92 (DTPGH), and 142-145 (NKLD) contribute to the GTP site.

The protein belongs to the TRAFAC class translation factor GTPase superfamily. Classic translation factor GTPase family. PrfC subfamily.

The protein localises to the cytoplasm. Functionally, increases the formation of ribosomal termination complexes and stimulates activities of RF-1 and RF-2. It binds guanine nucleotides and has strong preference for UGA stop codons. It may interact directly with the ribosome. The stimulation of RF-1 and RF-2 is significantly reduced by GTP and GDP, but not by GMP. The protein is Peptide chain release factor 3 of Shigella sonnei (strain Ss046).